Reading from the N-terminus, the 171-residue chain is Ribosome-binding factor A (171 aa).

Residues 126 to 138 (VREGAKHAGDADP) are compositionally biased toward basic and acidic residues. The segment at 126–171 (VREGAKHAGDADPYRVSGVEEEAGGSGEVQAEFDAEDTGDRNRQDD) is disordered.

Belongs to the RbfA family. In terms of assembly, monomer. Binds 30S ribosomal subunits, but not 50S ribosomal subunits or 70S ribosomes.

It is found in the cytoplasm. In terms of biological role, one of several proteins that assist in the late maturation steps of the functional core of the 30S ribosomal subunit. Associates with free 30S ribosomal subunits (but not with 30S subunits that are part of 70S ribosomes or polysomes). Required for efficient processing of 16S rRNA. May interact with the 5'-terminal helix region of 16S rRNA. The chain is Ribosome-binding factor A from Mycobacterium sp. (strain JLS).